A 453-amino-acid polypeptide reads, in one-letter code: Ezy-1 protein (453 aa).

Positions 1-28 (MQLSNSLRSARSAAASSGCALASRPVVA) are cleaved as a signal peptide. Disordered regions lie at residues 167-187 (SDGG…DADG), 272-307 (TGKA…SSGG), and 412-453 (SAGD…SPNM). Over residues 279-300 (AEGDDGEGEEEGEAQDVGEDAV) the composition is skewed to acidic residues. Residues 415 to 425 (DGHEPEPKRPE) are compositionally biased toward basic and acidic residues.

The chain is Ezy-1 protein (Ezy-1) from Chlamydomonas reinhardtii (Chlamydomonas smithii).